A 379-amino-acid chain; its full sequence is Tryptophan 2,3-dioxygenase (379 aa).

Substrate is bound by residues 57 to 61 (FIITH) and R128. Position 312 (H312) interacts with heme. T327 provides a ligand contact to substrate.

It belongs to the tryptophan 2,3-dioxygenase family. In terms of assembly, homotetramer. Dimer of dimers. The cofactor is heme.

It carries out the reaction L-tryptophan + O2 = N-formyl-L-kynurenine. The protein operates within amino-acid degradation; L-tryptophan degradation via kynurenine pathway; L-kynurenine from L-tryptophan: step 1/2. It participates in pigment biosynthesis; ommochrome biosynthesis. In terms of biological role, heme-dependent dioxygenase that catalyzes the oxidative cleavage of the L-tryptophan (L-Trp) pyrrole ring and converts L-tryptophan to N-formyl-L-kynurenine. Catalyzes the oxidative cleavage of the indole moiety. The polypeptide is Tryptophan 2,3-dioxygenase (Drosophila erecta (Fruit fly)).